The sequence spans 393 residues: Potassium channel subfamily K member 4 (393 aa).

At 1 to 3 (MRS) the chain is on the cytoplasmic side. Residues 4–24 (TTLLALLALVLLYLVSGALVF) traverse the membrane as a helical segment. At 25–87 (RALEQPHEQQ…NSTSNSSHSA (63 aa)) the chain is on the extracellular side. N-linked (GlcNAc...) asparagine glycans are attached at residues Asn-78 and Asn-82. An intramembrane region (helical) is located at residues 88–102 (WDLGSAFFFSGTIIT). Residues Thr-103, Ile-104, Gly-105, and Tyr-106 each contribute to the K(+) site. A selectivity filter 1 region spans residues 103-108 (TIGYGN). The stretch at 103–109 (TIGYGNV) is an intramembrane region. Residues 110-117 (ALRTDAGR) lie on the Extracellular side of the membrane. The helical transmembrane segment at 118 to 150 (LFCIFYALVGIPLFGILLAGVGDRLGSSLRHGI) threads the bilayer. At 151–172 (GHIEAIFLKWHVPPELVRVLSA) the chain is on the cytoplasmic side. The helical transmembrane segment at 173–194 (MLFLLIGCLLFVLTPTFVFCYM) threads the bilayer. The Extracellular portion of the chain corresponds to 195-199 (EDWSK). Residues 200–213 (LEAIYFVIVTLTTV) constitute an intramembrane region (helical). Thr-212, Val-213, Gly-214, and Phe-215 together coordinate K(+). The tract at residues 212–217 (TVGFGD) is selectivity filter 2. An intramembrane segment occupies 214–219 (GFGDYV). At 220 to 233 (AGADPRQDSPAYQP) the chain is on the extracellular side. A helical transmembrane segment spans residues 234–260 (LVWFWILLGLAYFASVLTTIGNWLRVV). Residues 261-393 (SRRTRAEMGG…GRPRDKGVPV (133 aa)) are Cytoplasmic-facing. The segment at 285–393 (RVTQRAGPAA…GRPRDKGVPV (109 aa)) is disordered. The segment covering 319-332 (SPSPPEKAQPPSPP) has biased composition (pro residues). Residues 365–384 (PRGRRRPNPPRKPVRPRGPG) are compositionally biased toward basic residues.

The protein belongs to the two pore domain potassium channel (TC 1.A.1.8) family. In terms of assembly, homodimer; disulfide-linked. Forms heterodimers with other 2-pore domain K(+) channel subunits, such as KCNK2 and KCNK10. N-glycosylated.

It is found in the cell membrane. The protein localises to the cell projection. The protein resides in the axon. It carries out the reaction K(+)(in) = K(+)(out). The catalysed reaction is Rb(+)(in) = Rb(+)(out). It catalyses the reaction Cs(+)(in) = Cs(+)(out). With respect to regulation, activated by mechanical stretch and arachidonic acid. In terms of biological role, k(+) channel that conducts voltage-dependent outward rectifying currents upon membrane depolarization. Voltage sensing is coupled to K(+) electrochemical gradient in an 'ion flux gating' mode where outward but not inward ion flow opens the gate. Converts to voltage-independent 'leak' conductance mode upon stimulation by various stimuli including mechanical membrane stretch, basic pH, heat and lipids. Homo- and heterodimerizes to form functional channels with distinct regulatory and gating properties. At trigeminal A-beta afferent nerves, the heterodimer of KCNK2/TREK-1 and KCNK4/TRAAK is mostly coexpressed at nodes of Ranvier where it conducts voltage-independent mechanosensitive and thermosensitive currents, allowing rapid action potential repolarization, high speed and high frequence saltatory conduction on myelinated nerves to ensure prompt sensory responses. Permeable to other monovalent cations such as Rb(+) and Cs(+). The chain is Potassium channel subfamily K member 4 from Homo sapiens (Human).